A 399-amino-acid chain; its full sequence is Acetate kinase (399 aa).

Residue Asn7 participates in Mg(2+) binding. ATP is bound at residue Lys14. Arg89 contacts substrate. The active-site Proton donor/acceptor is Asp146. ATP-binding positions include 206–210 (HLGNG), 280–282 (DMR), and 328–332 (GIGEN). Glu382 serves as a coordination point for Mg(2+).

The protein belongs to the acetokinase family. In terms of assembly, homodimer. Mg(2+) is required as a cofactor. Requires Mn(2+) as cofactor.

It is found in the cytoplasm. It catalyses the reaction acetate + ATP = acetyl phosphate + ADP. It functions in the pathway metabolic intermediate biosynthesis; acetyl-CoA biosynthesis; acetyl-CoA from acetate: step 1/2. Catalyzes the formation of acetyl phosphate from acetate and ATP. Can also catalyze the reverse reaction. This is Acetate kinase from Campylobacter fetus subsp. fetus (strain 82-40).